We begin with the raw amino-acid sequence, 188 residues long: Elongation factor P-like protein (188 aa).

It belongs to the elongation factor P family.

This Saccharophagus degradans (strain 2-40 / ATCC 43961 / DSM 17024) protein is Elongation factor P-like protein.